A 202-amino-acid chain; its full sequence is Imidazoleglycerol-phosphate dehydratase (202 aa).

Belongs to the imidazoleglycerol-phosphate dehydratase family.

The protein resides in the cytoplasm. The enzyme catalyses D-erythro-1-(imidazol-4-yl)glycerol 3-phosphate = 3-(imidazol-4-yl)-2-oxopropyl phosphate + H2O. It functions in the pathway amino-acid biosynthesis; L-histidine biosynthesis; L-histidine from 5-phospho-alpha-D-ribose 1-diphosphate: step 6/9. The protein is Imidazoleglycerol-phosphate dehydratase of Corynebacterium diphtheriae (strain ATCC 700971 / NCTC 13129 / Biotype gravis).